The primary structure comprises 821 residues: DNA ligase (821 aa).

NAD(+) contacts are provided by residues 33–37, 82–83, and E113; these read DVDYD and SL. Catalysis depends on K115, which acts as the N6-AMP-lysine intermediate. Residues R136, E173, K290, and K314 each contribute to the NAD(+) site. Zn(2+)-binding residues include C408, C411, C426, and C432. The region spanning 741–821 is the BRCT domain; sequence IVAGPLDGQT…RLLAYLAEHE (81 aa).

The protein belongs to the NAD-dependent DNA ligase family. LigA subfamily. The cofactor is Mg(2+). Mn(2+) serves as cofactor.

It carries out the reaction NAD(+) + (deoxyribonucleotide)n-3'-hydroxyl + 5'-phospho-(deoxyribonucleotide)m = (deoxyribonucleotide)n+m + AMP + beta-nicotinamide D-nucleotide.. DNA ligase that catalyzes the formation of phosphodiester linkages between 5'-phosphoryl and 3'-hydroxyl groups in double-stranded DNA using NAD as a coenzyme and as the energy source for the reaction. It is essential for DNA replication and repair of damaged DNA. This Stenotrophomonas maltophilia (strain K279a) protein is DNA ligase.